We begin with the raw amino-acid sequence, 181 residues long: Large ribosomal subunit protein uL5 (181 aa).

This sequence belongs to the universal ribosomal protein uL5 family. In terms of assembly, part of the 50S ribosomal subunit; part of the 5S rRNA/L5/L18/L25 subcomplex. Contacts the 5S rRNA and the P site tRNA. Forms a bridge to the 30S subunit in the 70S ribosome.

Its function is as follows. This is one of the proteins that bind and probably mediate the attachment of the 5S RNA into the large ribosomal subunit, where it forms part of the central protuberance. In the 70S ribosome it contacts protein S13 of the 30S subunit (bridge B1b), connecting the 2 subunits; this bridge is implicated in subunit movement. Contacts the P site tRNA; the 5S rRNA and some of its associated proteins might help stabilize positioning of ribosome-bound tRNAs. In Mesomycoplasma hyopneumoniae (strain 7448) (Mycoplasma hyopneumoniae), this protein is Large ribosomal subunit protein uL5.